Consider the following 1164-residue polypeptide: Phytochrome D (1164 aa).

The interval 1–55 is disordered; it reads MVSGGGSKTSGGEAASSGHRRSRHTSAAEQAQSSANKALRSQNQQPQNHGGGTES. Polar residues predominate over residues 25–55; the sequence is TSAAEQAQSSANKALRSQNQQPQNHGGGTES. In terms of domain architecture, GAF spans 255-437; sequence DIKLLCDTVV…AFGLQLNMEL (183 aa). C360 contributes to the phytochromobilin binding site. PAS domains follow at residues 656 to 727 and 790 to 861; these read VARE…LKGD and DYKA…MIVL. Residues 938 to 1157 enclose the Histidine kinase domain; the sequence is YIFQVIKNPL…LIVIELPVPL (220 aa).

The protein belongs to the phytochrome family. As to quaternary structure, homodimer. In terms of processing, contains one covalently linked phytochromobilin chromophore.

In terms of biological role, regulatory photoreceptor which exists in two forms that are reversibly interconvertible by light: the Pr form that absorbs maximally in the red region of the spectrum and the Pfr form that absorbs maximally in the far-red region. Photoconversion of Pr to Pfr induces an array of morphogenic responses, whereas reconversion of Pfr to Pr cancels the induction of those responses. Pfr controls the expression of a number of nuclear genes including those encoding the small subunit of ribulose-bisphosphate carboxylase, chlorophyll A/B binding protein, protochlorophyllide reductase, rRNA, etc. It also controls the expression of its own gene(s) in a negative feedback fashion. In Arabidopsis thaliana (Mouse-ear cress), this protein is Phytochrome D (PHYD).